Reading from the N-terminus, the 118-residue chain is uncharacterized protein (118 aa).

Over residues 1–12 (MADDNVSFTDQG) the composition is skewed to polar residues. The interval 1-63 (MADDNVSFTD…KKGKTKKVRK (63 aa)) is disordered. The segment covering 39–63 (TKKKGKKNKKSKKKAKKGKTKKVRK) has biased composition (basic residues). The helical transmembrane segment at 81–101 (FCAGIIVAMIMLFVIIIYGII) threads the bilayer.

Its subcellular location is the membrane. This is an uncharacterized protein from Caenorhabditis elegans.